A 716-amino-acid polypeptide reads, in one-letter code: DNA ligase (716 aa).

NAD(+)-binding positions include 50–54 (DAEYD), 99–100 (SL), and Glu-132. The active-site N6-AMP-lysine intermediate is Lys-134. Residues Arg-155, Glu-192, Lys-308, and Lys-332 each coordinate NAD(+). Positions 437, 439, 461, and 467 each coordinate Zn(2+). The region spanning 638-716 (KSNSAVAGKT…EDEWLKLIGE (79 aa)) is the BRCT domain.

Belongs to the NAD-dependent DNA ligase family. LigA subfamily. It depends on Mg(2+) as a cofactor. Mn(2+) serves as cofactor.

It carries out the reaction NAD(+) + (deoxyribonucleotide)n-3'-hydroxyl + 5'-phospho-(deoxyribonucleotide)m = (deoxyribonucleotide)n+m + AMP + beta-nicotinamide D-nucleotide.. Functionally, DNA ligase that catalyzes the formation of phosphodiester linkages between 5'-phosphoryl and 3'-hydroxyl groups in double-stranded DNA using NAD as a coenzyme and as the energy source for the reaction. It is essential for DNA replication and repair of damaged DNA. In Bradyrhizobium diazoefficiens (strain JCM 10833 / BCRC 13528 / IAM 13628 / NBRC 14792 / USDA 110), this protein is DNA ligase.